The sequence spans 68 residues: Large ribosomal subunit protein bL32 (68 aa).

Positions Met1–Asp20 are disordered.

It belongs to the bacterial ribosomal protein bL32 family.

This is Large ribosomal subunit protein bL32 from Cereibacter sphaeroides (strain ATCC 17029 / ATH 2.4.9) (Rhodobacter sphaeroides).